Consider the following 365-residue polypeptide: 3-amino-4-hydroxybenzoate 4-O-methyltransferase (365 aa).

The segment covering 1–18 has biased composition (polar residues); that stretch reads MTVPENAQHTAPDQTQHT. The tract at residues 1-32 is disordered; sequence MTVPENAQHTAPDQTQHTAPDRTRQAQQAAPD. S-adenosyl-L-methionine is bound by residues aspartate 227, 253–255, and arginine 270; that span reads GDF. The active-site Proton acceptor is histidine 273.

Belongs to the class I-like SAM-binding methyltransferase superfamily. Cation-independent O-methyltransferase family.

The enzyme catalyses 3-amino-2,4-dihydroxybenzoate + S-adenosyl-L-methionine = 3-amino-2-hydroxy-4-methoxybenzoate + S-adenosyl-L-homocysteine + H(+). It participates in antibiotic biosynthesis. Its function is as follows. Part of a gene cluster involved in the biosynthesis of cremeomycin, a light-sensitive o-diazoquinone with antibacterial and antiproliferative effects. Catalyzes the methylation of the C4 hydroxyl group of 3-amino-2,4-dihydroxybenzoate (3,2,4-ADHBA) to form 3-amino-2-hydroxy-4-methoxybenzoate (3,2,4-AHMBA). In vitro, can also catalyze the methylation of 3-amino-4-hydroxybenzoate (3,4-AHBA). This Streptomyces cremeus protein is 3-amino-4-hydroxybenzoate 4-O-methyltransferase.